Consider the following 895-residue polypeptide: Structural polyprotein (895 aa).

It belongs to the picornaviruses polyprotein family. In terms of processing, specific enzymatic cleavages in vivo yield mature proteins.

It localises to the virion. The protein localises to the host cytoplasm. Functionally, precursor of all the viral capsid proteins. In terms of biological role, capsid protein 1, together with capsid proteins 2 and 3, form an icosahedral capsid protecting the viral RNA genome. The icosahedral capsid has a pseudo-T=3 symmetry with a diameter of approximately 300 Angstroms, and is composed of 60 copies of each CP1, CP2, and CP3. CP1 is situated at the 12 fivefold axes, whereas CP2 and CP3 are located at the quasi-sixfold axes. All these proteins contain a beta-sheet structure called beta-barrel jelly roll. Its function is as follows. Capsid protein 4 is a tstructural component of the icosahedral capsid protecting the genomic RNA. It may play an important role in capsid assembly. Capsid protein 2, together with capsid proteins 1 and 3, form an icosahedral capsid protecting the viral RNA genome. The icosahedral capsid has a pseudo-T=3 symmetry with a diameter of approximately 300 Angstroms, and is composed of 60 copies of each CP1, CP2, and CP3. CP1 is situated at the 12 fivefold axes, whereas CP2 and CP3 are located at the quasi-sixfold axes. All these proteins contain a beta-sheet structure called beta-barrel jelly roll. Functionally, capsid protein 3, together with capsid proteins 1 and 2, form an icosahedral capsid protecting the viral RNA genome. The icosahedral capsid has a pseudo-T=3 symmetry with a diameter of approximately 300 Angstroms, and is composed of 60 copies of each CP1, CP2, and CP3. CP1 is situated at the 12 fivefold axes, whereas CP2 and CP3 are located at the quasi-sixfold axes. All these proteins contain a beta-sheet structure called beta-barrel jelly roll. This chain is Structural polyprotein, found in Cricket paralysis virus (isolate Teleogryllus commodus/Australia/CrPVVIC/1968) (CrPV).